Reading from the N-terminus, the 188-residue chain is Peptidyl-tRNA hydrolase (188 aa).

Tyr14 contributes to the tRNA binding site. His19 acts as the Proton acceptor in catalysis. 3 residues coordinate tRNA: Tyr64, Asn66, and Asn112.

It belongs to the PTH family. In terms of assembly, monomer.

The protein resides in the cytoplasm. The enzyme catalyses an N-acyl-L-alpha-aminoacyl-tRNA + H2O = an N-acyl-L-amino acid + a tRNA + H(+). Hydrolyzes ribosome-free peptidyl-tRNAs (with 1 or more amino acids incorporated), which drop off the ribosome during protein synthesis, or as a result of ribosome stalling. Its function is as follows. Catalyzes the release of premature peptidyl moieties from peptidyl-tRNA molecules trapped in stalled 50S ribosomal subunits, and thus maintains levels of free tRNAs and 50S ribosomes. In Bacillus pumilus (strain SAFR-032), this protein is Peptidyl-tRNA hydrolase.